We begin with the raw amino-acid sequence, 148 residues long: Aspartate 1-decarboxylase (148 aa).

S25 functions as the Schiff-base intermediate with substrate; via pyruvic acid in the catalytic mechanism. S25 carries the pyruvic acid (Ser) modification. Substrate is bound at residue T57. The Proton donor role is filled by Y58. Residue 73-75 coordinates substrate; that stretch reads GAA.

It belongs to the PanD family. Heterooctamer of four alpha and four beta subunits. Pyruvate is required as a cofactor. Post-translationally, is synthesized initially as an inactive proenzyme, which is activated by self-cleavage at a specific serine bond to produce a beta-subunit with a hydroxyl group at its C-terminus and an alpha-subunit with a pyruvoyl group at its N-terminus.

The protein resides in the cytoplasm. The enzyme catalyses L-aspartate + H(+) = beta-alanine + CO2. The protein operates within cofactor biosynthesis; (R)-pantothenate biosynthesis; beta-alanine from L-aspartate: step 1/1. In terms of biological role, catalyzes the pyruvoyl-dependent decarboxylation of aspartate to produce beta-alanine. This Rhodococcus jostii (strain RHA1) protein is Aspartate 1-decarboxylase.